Consider the following 560-residue polypeptide: Solute carrier family 22 member 6 (560 aa).

Over 1-15 (MAFSDLLEQVGSTGR) the chain is Cytoplasmic. A helical transmembrane segment spans residues 16-36 (FQVLHVTLLSMPILMMASHNL). Residues 37–143 (LQNFVAAVPP…LVCDYRALKQ (107 aa)) are Extracellular-facing. Residues 144 to 164 (MSQTTYMGGVLVGAIVFGGLS) traverse the membrane as a helical segment. The Cytoplasmic portion of the chain corresponds to 165 to 170 (DRFGRR). The chain crosses the membrane as a helical span at residues 171-191 (VLLLISNLMMAIGGTCVAFST). Residues 192–201 (SFTMFCVFRV) are Extracellular-facing. Residues 202 to 222 (CCGMALSGLVLNSFSLIVEWI) form a helical membrane-spanning segment. Residues 223–228 (PTRVRT) are Cytoplasmic-facing. Residues 229-249 (VVGTGTGYCYTTGQLILAAVA) traverse the membrane as a helical segment. The Extracellular segment spans residues 250–256 (YCIRDWR). Residues 257–277 (WLTLAVSLPFYVSFLYSWWFL) traverse the membrane as a helical segment. Topologically, residues 278–345 (ESARWLVLTK…DLLRTSTMRT (68 aa)) are cytoplasmic. The helical transmembrane segment at 346-366 (ITICLSAVWFSTSFAYYGLSM) threads the bilayer. Over 367-374 (DLQKFGVS) the chain is Extracellular. The chain crosses the membrane as a helical span at residues 375–395 (IYLIQIIFGAVDIPAKIIVTI). Topologically, residues 396 to 406 (CMSMLGRRPSQ) are cytoplasmic. The chain crosses the membrane as a helical span at residues 407–427 (CGALVLAGIMILINLLVPSDL). Topologically, residues 428-433 (QMLRTS) are extracellular. The chain crosses the membrane as a helical span at residues 434-454 (LAVIGKGCLAASFNCCYLYAG). Residues 455–465 (ELYPTVIRQSG) lie on the Cytoplasmic side of the membrane. Residues 466–486 (MGWVSMMARFGAMVAPMVLLL) form a helical membrane-spanning segment. The Extracellular portion of the chain corresponds to 487-491 (GDDYP). The helical transmembrane segment at 492-512 (WIPGFIYGGAPIVSGIFAFFL) threads the bilayer. Residues 513 to 560 (PETLSQPLPDTIQDIDDRGLARTNSKRLPEKLDLAMKDPSCVLLKESV) lie on the Cytoplasmic side of the membrane.

The protein belongs to the major facilitator (TC 2.A.1) superfamily. Organic cation transporter (TC 2.A.1.19) family. Post-translationally, glycosylated. Glycosylation is necessary for proper targeting of the transporter to the plasma membrane.

Its subcellular location is the cell membrane. The protein localises to the basolateral cell membrane. The protein resides in the basal cell membrane. Functionally, involved in the renal elimination of endogenous and exogenous organic anions. Functions as organic anion exchanger when the uptake of one molecule of organic anion is coupled with an efflux of one molecule of endogenous dicarboxylic acid (glutarate, ketoglutarate, etc). Mediates the sodium-independent uptake of p-aminohippurate (PAH), 2,3-dimercapto-1-propanesulfonic acid (DMPS), cidofovir, adefovir, 9-(2-phosphonylmethoxyethyl) guanine (PMEG), 9-(2-phosphonylmethoxyethyl) diaminopurine (PMEDAP), ochratoxin (OTA), acyclovir (ACV), 3'-azido-3-'deoxythymidine (AZT), cimetidine (CMD), 2,4-dichloro-phenoxyacetate (2,4-D), hippurate (HA), indoleacetate (IA), indoxyl sulfate (IS) and 3-carboxy-4-methyl-5-propyl-2-furanpropionate (CMPF) and edaravone sulfate. PAH uptake is inhibited by p-chloromercuribenzenesulphonate (PCMBS), diethyl pyrocarbonate (DEPC), indomethacin, sulindac, diclofenac, carprofen, okadaic acid, benzothiazolylcysteine (BTC), S-chlorotrifluoroethylcysteine (CTFC), cysteine S-conjugates S-dichlorovinylcysteine (DCVC), furosemide, steviol, phorbol 12-myristate 13-acetate (PMA), calcium ionophore A23187, benzylpenicillin, bumetamide, losartan, probenecid, phenol red, urate, glutarate and alpha-ketoglutarate. The chain is Solute carrier family 22 member 6 (slc22a6) from Danio rerio (Zebrafish).